The following is a 1742-amino-acid chain: Meiosis regulator and mRNA stability factor 1 (1742 aa).

S65 is subject to Phosphoserine. One can recognise an NYN domain in the interval 351–488 (IGVFWDIENC…ALLHHANELI (138 aa)). 2 disordered regions span residues 620-642 (PSSA…TRNA) and 655-721 (SKTG…KEKE). Polar residues predominate over residues 631 to 642 (SQANSGSATRNA). A compositionally biased stretch (low complexity) spans 673–689 (APPHRSSSAAAPAPKAP). Y696 is subject to Phosphotyrosine. S757 carries the phosphoserine modification. An RRM domain is found at 788–867 (VDVQISNLDY…KKILVSLATG (80 aa)). HTH OST-type domains follow at residues 872–946 (SLSL…SPLG) and 1000–1077 (SLKT…HNKP). Residues S1089 and S1091 each carry the phosphoserine modification. HTH OST-type domains are found at residues 1097–1171 (QLIQ…LTHR), 1173–1247 (QVKR…CIPR), 1257–1332 (RTKQ…TEVE), 1333–1408 (RFKA…INRK), 1409–1484 (SLRA…CVKL), and 1486–1560 (SLYL…LKND). A Phosphoserine modification is found at S1571. Residues 1678–1729 (IRNENLPPDPSSPGVSAAVPAPPSPSSETPESLLSKDPTESPAKKQPKNRVK) form a disordered region. Residues 1703–1712 (SSETPESLLS) show a composition bias toward low complexity.

As to quaternary structure, interacts with LIMK2.

The protein resides in the peroxisome. Essential regulator of oogenesis required for female meiotic progression to repress transposable elements and preventing their mobilization, which is essential for the germline integrity. Probably acts via some RNA metabolic process, equivalent to the piRNA system in males, which mediates the repression of transposable elements during meiosis by forming complexes composed of RNAs and governs the methylation and subsequent repression of transposons. Also required to protect from DNA double-strand breaks. The protein is Meiosis regulator and mRNA stability factor 1 of Bos taurus (Bovine).